Consider the following 462-residue polypeptide: Argininosuccinate lyase (462 aa).

It belongs to the lyase 1 family. Argininosuccinate lyase subfamily.

Its subcellular location is the cytoplasm. It carries out the reaction 2-(N(omega)-L-arginino)succinate = fumarate + L-arginine. It functions in the pathway amino-acid biosynthesis; L-arginine biosynthesis; L-arginine from L-ornithine and carbamoyl phosphate: step 3/3. This is Argininosuccinate lyase from Thermus thermophilus (strain ATCC BAA-163 / DSM 7039 / HB27).